Consider the following 254-residue polypeptide: Alcohol dehydrogenase 2 (254 aa).

Position 10-33 (10-33 (FVAGLGGIGLDTSREIVKSGPKNL)) interacts with NAD(+). Ser138 is a binding site for substrate. Tyr151 serves as the catalytic Proton acceptor.

It belongs to the short-chain dehydrogenases/reductases (SDR) family. As to quaternary structure, homodimer.

It catalyses the reaction a primary alcohol + NAD(+) = an aldehyde + NADH + H(+). It carries out the reaction a secondary alcohol + NAD(+) = a ketone + NADH + H(+). The polypeptide is Alcohol dehydrogenase 2 (Adh2) (Drosophila hydei (Fruit fly)).